Here is a 360-residue protein sequence, read N- to C-terminus: Photosystem II protein D1 2 (360 aa).

The next 3 helical transmembrane spans lie at 29–46 (YIGW…TAVT), 118–133 (HYMI…QWEY), and 142–156 (WICV…ATYS). His-118 serves as a coordination point for chlorophyll a. Position 126 (Tyr-126) interacts with pheophytin a. The [CaMn4O5] cluster site is built by Asp-170 and Glu-189. A helical membrane pass occupies residues 197-218 (FHMFGVAGVLGGSLFAAMHGSL). His-198 is a binding site for chlorophyll a. Residues His-215 and 264 to 265 (SF) contribute to the a quinone site. His-215 serves as a coordination point for Fe cation. His-272 contacts Fe cation. Residues 274–288 (FLGAWPVVCIWLTAM) form a helical membrane-spanning segment. The [CaMn4O5] cluster site is built by His-332, Glu-333, Asp-342, and Ala-344. A propeptide spanning residues 345 to 360 (AGESAPVALTAPVING) is cleaved from the precursor.

The protein belongs to the reaction center PufL/M/PsbA/D family. In terms of assembly, PSII is composed of 1 copy each of membrane proteins PsbA, PsbB, PsbC, PsbD, PsbE, PsbF, PsbH, PsbI, PsbJ, PsbK, PsbL, PsbM, PsbT, PsbX, PsbY, PsbZ, Psb30/Ycf12, peripheral proteins PsbO, CyanoQ (PsbQ), PsbU, PsbV and a large number of cofactors. It forms dimeric complexes. Requires The D1/D2 heterodimer binds P680, chlorophylls that are the primary electron donor of PSII, and subsequent electron acceptors. It shares a non-heme iron and each subunit binds pheophytin, quinone, additional chlorophylls, carotenoids and lipids. D1 provides most of the ligands for the Mn4-Ca-O5 cluster of the oxygen-evolving complex (OEC). There is also a Cl(-1) ion associated with D1 and D2, which is required for oxygen evolution. The PSII complex binds additional chlorophylls, carotenoids and specific lipids. as cofactor. In terms of processing, tyr-161 forms a radical intermediate that is referred to as redox-active TyrZ, YZ or Y-Z. C-terminally processed by CtpA; processing is essential to allow assembly of the oxygen-evolving complex and thus photosynthetic growth.

The protein resides in the cellular thylakoid membrane. The enzyme catalyses 2 a plastoquinone + 4 hnu + 2 H2O = 2 a plastoquinol + O2. Functionally, photosystem II (PSII) is a light-driven water:plastoquinone oxidoreductase that uses light energy to abstract electrons from H(2)O, generating O(2) and a proton gradient subsequently used for ATP formation. It consists of a core antenna complex that captures photons, and an electron transfer chain that converts photonic excitation into a charge separation. The D1/D2 (PsbA/PsbD) reaction center heterodimer binds P680, the primary electron donor of PSII as well as several subsequent electron acceptors. This chain is Photosystem II protein D1 2, found in Acaryochloris marina (strain MBIC 11017).